The following is a 36-amino-acid chain: Dolichyl-diphosphooligosaccharide--protein glycosyltransferase subunit 2 (36 aa).

The protein belongs to the SWP1 family. In terms of assembly, component of the oligosaccharyltransferase (OST) complex.

Its subcellular location is the endoplasmic reticulum. The protein localises to the endoplasmic reticulum membrane. It participates in protein modification; protein glycosylation. Subunit of the oligosaccharyl transferase (OST) complex that catalyzes the initial transfer of a defined glycan (Glc(3)Man(9)GlcNAc(2) in eukaryotes) from the lipid carrier dolichol-pyrophosphate to an asparagine residue within an Asn-X-Ser/Thr consensus motif in nascent polypeptide chains, the first step in protein N-glycosylation. N-glycosylation occurs cotranslationally and the complex associates with the Sec61 complex at the channel-forming translocon complex that mediates protein translocation across the endoplasmic reticulum (ER). All subunits are required for a maximal enzyme activity. The protein is Dolichyl-diphosphooligosaccharide--protein glycosyltransferase subunit 2 of Gallus gallus (Chicken).